The primary structure comprises 406 residues: Luteothin monooxygenase (406 aa).

Residues H98, R102, R296, G350, H353, and C355 each coordinate heme b.

The protein belongs to the cytochrome P450 family. In terms of assembly, monomer. The cofactor is heme b.

The enzyme catalyses luteothin + 4 reduced [2Fe-2S]-[ferredoxin] + 2 O2 + 4 H(+) = aureothin + 4 oxidized [2Fe-2S]-[ferredoxin] + 3 H2O. It participates in antibiotic biosynthesis. Its pathway is polyketide biosynthesis. Bifunctional cytochrome P450 protein involved in the biosynthesis of the antibiotic aureothin, a nitroaryl polyketide metabolite with antifungal, cytotoxic and insecticidal activities. Catalyzes the hydroxylation of luteothin (also called deoxyaureothin), leading to the formation of the intermediate (7R)-7-hydroxydeoxyaureothin, followed by the formation of the aureothin tetrahydrofuran ring, the final step in the biosynthesis of aureothin. In Streptomyces thioluteus, this protein is Luteothin monooxygenase.